The sequence spans 120 residues: Aspartate 1-decarboxylase (120 aa).

The Schiff-base intermediate with substrate; via pyruvic acid role is filled by Ser25. Position 25 is a pyruvic acid (Ser) (Ser25). Position 57 (Thr57) interacts with substrate. Tyr58 acts as the Proton donor in catalysis. 73–75 (GAA) is a substrate binding site.

This sequence belongs to the PanD family. Heterooctamer of four alpha and four beta subunits. Requires pyruvate as cofactor. In terms of processing, is synthesized initially as an inactive proenzyme, which is activated by self-cleavage at a specific serine bond to produce a beta-subunit with a hydroxyl group at its C-terminus and an alpha-subunit with a pyruvoyl group at its N-terminus.

It localises to the cytoplasm. It carries out the reaction L-aspartate + H(+) = beta-alanine + CO2. Its pathway is cofactor biosynthesis; (R)-pantothenate biosynthesis; beta-alanine from L-aspartate: step 1/1. Functionally, catalyzes the pyruvoyl-dependent decarboxylation of aspartate to produce beta-alanine. In Deinococcus deserti (strain DSM 17065 / CIP 109153 / LMG 22923 / VCD115), this protein is Aspartate 1-decarboxylase.